The sequence spans 416 residues: Gamma-glutamyl phosphate reductase (416 aa).

Belongs to the gamma-glutamyl phosphate reductase family.

It is found in the cytoplasm. The catalysed reaction is L-glutamate 5-semialdehyde + phosphate + NADP(+) = L-glutamyl 5-phosphate + NADPH + H(+). It functions in the pathway amino-acid biosynthesis; L-proline biosynthesis; L-glutamate 5-semialdehyde from L-glutamate: step 2/2. Its function is as follows. Catalyzes the NADPH-dependent reduction of L-glutamate 5-phosphate into L-glutamate 5-semialdehyde and phosphate. The product spontaneously undergoes cyclization to form 1-pyrroline-5-carboxylate. The protein is Gamma-glutamyl phosphate reductase of Streptococcus thermophilus (strain ATCC BAA-491 / LMD-9).